An 86-amino-acid polypeptide reads, in one-letter code: Protein Tat (86 aa).

The tract at residues 1–21 (MDPVDPNLEPWNHPGSQPKTA) is disordered. Positions 1 to 24 (MDPVDPNLEPWNHPGSQPKTACNR) are interaction with human CREBBP. The interval 1-48 (MDPVDPNLEPWNHPGSQPKTACNRCHCKKCCYHCQVCFITKGLGISYG) is transactivation. Residues cysteine 22, cysteine 25, and cysteine 27 each contribute to the Zn(2+) site. The tract at residues 22-37 (CNRCHCKKCCYHCQVC) is cysteine-rich. Lysine 28 is subject to N6-acetyllysine; by host PCAF. The Zn(2+) site is built by cysteine 30, histidine 33, cysteine 34, and cysteine 37. Residues 38-48 (FITKGLGISYG) are core. Residues 47 to 86 (YGRKKRRQRRRPSQGGQTHQDPIPKQPSSQPRGNPTGPKE) form a disordered region. Residues 48 to 58 (GRKKRRQRRRP) show a composition bias toward basic residues. Positions 49 to 57 (RKKRRQRRR) match the Nuclear localization signal, RNA-binding (TAR), and protein transduction motif. The interval 49 to 86 (RKKRRQRRRPSQGGQTHQDPIPKQPSSQPRGNPTGPKE) is interaction with the host capping enzyme RNGTT. N6-acetyllysine; by host EP300 and GCN5L2 occurs at positions 50 and 51. Arginine 52 and arginine 53 each carry asymmetric dimethylarginine; by host PRMT6. Positions 60–79 (QGGQTHQDPIPKQPSSQPRG) are enriched in polar residues. A Glycyl lysine isopeptide (Lys-Gly) (interchain with G-Cter in ubiquitin) cross-link involves residue lysine 71.

It belongs to the lentiviruses Tat family. In terms of assembly, interacts with host CCNT1. Associates with the P-TEFb complex composed at least of Tat, P-TEFb (CDK9 and CCNT1), TAR RNA, RNA Pol II. Recruits the HATs CREBBP, TAF1/TFIID, EP300, PCAF and GCN5L2. Interacts with host KAT5/Tip60; this interaction targets the latter to degradation. Interacts with the host deacetylase SIRT1. Interacts with host capping enzyme RNGTT; this interaction stimulates RNGTT. Binds to host KDR, and to the host integrins ITGAV/ITGB3 and ITGA5/ITGB1. Interacts with host KPNB1/importin beta-1 without previous binding to KPNA1/importin alpha-1. Interacts with EIF2AK2. Interacts with host nucleosome assembly protein NAP1L1; this interaction may be required for the transport of Tat within the nucleus, since the two proteins interact at the nuclear rim. Interacts with host C1QBP/SF2P32; this interaction involves lysine-acetylated Tat. Interacts with the host chemokine receptors CCR2, CCR3 and CXCR4. Interacts with host DPP4/CD26; this interaction may trigger an anti-proliferative effect. Interacts with host LDLR. Interacts with the host extracellular matrix metalloproteinase MMP1. Interacts with host PRMT6; this interaction mediates Tat's methylation. Interacts with, and is ubiquitinated by MDM2/Hdm2. Interacts with host PSMC3 and HTATIP2. Interacts with STAB1; this interaction may overcome SATB1-mediated repression of IL2 and IL2RA (interleukin) in T cells by binding to the same domain than HDAC1. Interacts (when acetylated) with human CDK13, thereby increasing HIV-1 mRNA splicing and promoting the production of the doubly spliced HIV-1 protein Nef. Interacts with host TBP; this interaction modulates the activity of transcriptional pre-initiation complex. Interacts with host RELA. Interacts with host PLSCR1; this interaction negatively regulates Tat transactivation activity by altering its subcellular distribution. In terms of processing, asymmetrical arginine methylation by host PRMT6 seems to diminish the transactivation capacity of Tat and affects the interaction with host CCNT1. Acetylation by EP300, CREBBP, GCN5L2/GCN5 and PCAF regulates the transactivation activity of Tat. EP300-mediated acetylation of Lys-50 promotes dissociation of Tat from the TAR RNA through the competitive binding to PCAF's bromodomain. In addition, the non-acetylated Tat's N-terminus can also interact with PCAF. PCAF-mediated acetylation of Lys-28 enhances Tat's binding to CCNT1. Lys-50 is deacetylated by SIRT1. Post-translationally, polyubiquitination by host MDM2 does not target Tat to degradation, but activates its transactivation function and fosters interaction with CCNT1 and TAR RNA. In terms of processing, phosphorylated by EIF2AK2 on serine and threonine residues adjacent to the basic region important for TAR RNA binding and function. Phosphorylation of Tat by EIF2AK2 is dependent on the prior activation of EIF2AK2 by dsRNA.

The protein resides in the host nucleus. The protein localises to the host nucleolus. It is found in the host cytoplasm. It localises to the secreted. Its function is as follows. Transcriptional activator that increases RNA Pol II processivity, thereby increasing the level of full-length viral transcripts. Recognizes a hairpin structure at the 5'-LTR of the nascent viral mRNAs referred to as the transactivation responsive RNA element (TAR) and recruits the cyclin T1-CDK9 complex (P-TEFb complex) that will in turn hyperphosphorylate the RNA polymerase II to allow efficient elongation. The CDK9 component of P-TEFb and other Tat-activated kinases hyperphosphorylate the C-terminus of RNA Pol II that becomes stabilized and much more processive. Other factors such as HTATSF1/Tat-SF1, SUPT5H/SPT5, and HTATIP2 are also important for Tat's function. Besides its effect on RNA Pol II processivity, Tat induces chromatin remodeling of proviral genes by recruiting the histone acetyltransferases (HATs) CREBBP, EP300 and PCAF to the chromatin. This also contributes to the increase in proviral transcription rate, especially when the provirus integrates in transcriptionally silent region of the host genome. To ensure maximal activation of the LTR, Tat mediates nuclear translocation of NF-kappa-B by interacting with host RELA. Through its interaction with host TBP, Tat may also modulate transcription initiation. Tat can reactivate a latently infected cell by penetrating in it and transactivating its LTR promoter. In the cytoplasm, Tat is thought to act as a translational activator of HIV-1 mRNAs. In terms of biological role, extracellular circulating Tat can be endocytosed by surrounding uninfected cells via the binding to several surface receptors such as CD26, CXCR4, heparan sulfate proteoglycans (HSPG) or LDLR. Neurons are rarely infected, but they internalize Tat via their LDLR. Through its interaction with nuclear HATs, Tat is potentially able to control the acetylation-dependent cellular gene expression. Modulates the expression of many cellular genes involved in cell survival, proliferation or in coding for cytokines or cytokine receptors. Tat plays a role in T-cell and neurons apoptosis. Tat induced neurotoxicity and apoptosis probably contribute to neuroAIDS. Circulating Tat also acts as a chemokine-like and/or growth factor-like molecule that binds to specific receptors on the surface of the cells, affecting many cellular pathways. In the vascular system, Tat binds to ITGAV/ITGB3 and ITGA5/ITGB1 integrins dimers at the surface of endothelial cells and competes with bFGF for heparin-binding sites, leading to an excess of soluble bFGF. In Homo sapiens (Human), this protein is Protein Tat.